The primary structure comprises 77 residues: Large ribosomal subunit protein eL14 (77 aa).

Belongs to the eukaryotic ribosomal protein eL14 family.

The sequence is that of Large ribosomal subunit protein eL14 from Methanococcus maripaludis (strain C5 / ATCC BAA-1333).